We begin with the raw amino-acid sequence, 334 residues long: Mevalonate kinase (334 aa).

ATP is bound at residue 110 to 120; that stretch reads PVGAGLGSSAA. The active-site Proton acceptor is the Asp-161.

Belongs to the GHMP kinase family. Mevalonate kinase subfamily. Homodimer. Requires Mg(2+) as cofactor.

The protein localises to the cytoplasm. It carries out the reaction (R)-mevalonate + ATP = (R)-5-phosphomevalonate + ADP + H(+). It functions in the pathway isoprenoid biosynthesis; isopentenyl diphosphate biosynthesis via mevalonate pathway; isopentenyl diphosphate from (R)-mevalonate: step 1/3. In terms of biological role, catalyzes the phosphorylation of (R)-mevalonate (MVA) to (R)-mevalonate 5-phosphate (MVAP). Functions in the mevalonate (MVA) pathway leading to isopentenyl diphosphate (IPP), a key precursor for the biosynthesis of isoprenoid compounds such as archaeal membrane lipids. This chain is Mevalonate kinase, found in Thermococcus gammatolerans (strain DSM 15229 / JCM 11827 / EJ3).